The following is a 124-amino-acid chain: Orexigenic neuropeptide QRFP (124 aa).

The N-terminal stretch at 1 to 17 is a signal peptide; the sequence is MRCLCSWLCLLLPLSAC. Residues 18-79 constitute a propeptide that is removed on maturation; sequence FPLLDRRGPT…REHTGFRLGR (62 aa). The segment at 63–100 is disordered; sequence KEQQASRREHTGFRLGRQDSGSEATGFLPTDSEKASGP. At Gln80 the chain carries Pyrrolidone carboxylic acid. Position 122 is a phenylalanine amide (Phe122).

Belongs to the RFamide neuropeptide family. Ligand for the G-protein coupled receptor QRFPR/GPR103. Expressed in the brain with highest expression levels in the hypothalamus and optic nerve. Also expressed in the trachea and mammary gland.

The protein localises to the secreted. Stimulates feeding and grooming behavior, metabolic rate and locomotor activity and increases blood pressure. May have orexigenic activity. May promote aldosterone secretion by the adrenal gland. The chain is Orexigenic neuropeptide QRFP (Qrfp) from Rattus norvegicus (Rat).